The sequence spans 225 residues: Histone H1.5 (225 aa).

The interval 1 to 23 is disordered; that stretch reads MSDVAVAETPAVKTPTKASKATK. Position 2 is an N-acetylserine (Ser-2). Positions 9–19 are enriched in low complexity; sequence TPAVKTPTKAS. The 77-residue stretch at 37–113 folds into the H15 domain; the sequence is AHPPFINMIT…GANGRFRLAV (77 aa). Residues 145-156 show a composition bias toward basic and acidic residues; the sequence is KKTVAKKTGDKV. The disordered stretch occupies residues 145-225; it reads KKTVAKKTGD…RKAVGTAPKA (81 aa). Residues 157–175 are compositionally biased toward basic residues; sequence KKVKSPKRIAKPAVKKVTK. Over residues 176 to 208 the composition is skewed to low complexity; sequence KAAAPTKSAANETAPKKAAATEAAPKKAAVTKA.

The protein belongs to the histone H1/H5 family.

The protein localises to the nucleus. The protein resides in the chromosome. In terms of biological role, histones H1 are necessary for the condensation of nucleosome chains into higher-order structures. This is Histone H1.5 (hil-5) from Caenorhabditis elegans.